The following is a 461-amino-acid chain: Putative dipeptidase CPSG_01350 (461 aa).

Over residues 1-10 (MSARDNEKGS) the composition is skewed to basic and acidic residues. Positions 1–31 (MSARDNEKGSARSQPSHAAASEIENVPRPSR) are disordered. Residues 35–52 (WTGTMIKVFIICACAGIV) form a helical membrane-spanning segment. Zn(2+) contacts are provided by His-90, Asp-92, and Glu-203. Residues Cys-142 and Cys-232 are joined by a disulfide bond. His-230 contacts substrate. Residues His-274 and His-295 each contribute to the Zn(2+) site. Arg-306 and Asp-366 together coordinate substrate. N-linked (GlcNAc...) asparagine glycosylation is present at Asn-379.

This sequence belongs to the metallo-dependent hydrolases superfamily. Peptidase M19 family. It depends on Zn(2+) as a cofactor.

The protein localises to the membrane. The catalysed reaction is an L-aminoacyl-L-amino acid + H2O = 2 an L-alpha-amino acid. Functionally, hydrolyzes a wide range of dipeptides. The polypeptide is Putative dipeptidase CPSG_01350 (Coccidioides posadasii (strain RMSCC 757 / Silveira) (Valley fever fungus)).